The chain runs to 151 residues: Trivalent organoarsenical cleaving enzyme (151 aa).

Residues 2 to 118 enclose the VOC domain; sequence SRVQLALRVP…GGEPWEVYVV (117 aa). Q5 is a binding site for Fe(2+). D61 is a binding site for roxarsone (III). Residue H62 coordinates Fe(2+). Residues C95 and C96 each contribute to the roxarsone (III) site. A Fe(2+)-binding site is contributed by E114.

Monomer. It depends on Fe(2+) as a cofactor.

It carries out the reaction methylarsonous acid + AH2 + O2 = arsenite + methanol + A + H(+). It catalyses the reaction roxarsone (III) + AH2 + O2 = 4-hydroxy-3-nitrocyclohexa-2,5-dien-1-one + arsenite + A + H(+). The catalysed reaction is nitarsone (III) + AH2 + O2 = 4-nitrocyclohexa-2,5-dien-1-one + arsenite + A + H(+). The enzyme catalyses 4-aminophenylarsonous acid + AH2 + O2 = 4-aminocyclohexa-2,5-dien-1-one + arsenite + A. Functionally, nonheme iron-dependent dioxygenase that can break carbon-arsenic bonds, playing a role in the detoxification of environmental organoarsenical compounds. Catalyzes the oxygen-dependent demethylation of highly toxic methylarsonous acid (MAs(III)) to arsenite, which can then be exported out of the cell. Can also cleave the C-As bond in several trivalent aromatic arsenicals, including roxarsone (III), nitarsone (III) and (4-aminophenyl)arsonous acid. Organoarsenical degradation by this enzyme is proposed to have a significant impact on the arsenic biogeocycle that maintains a balance between organic and inorganic species. The sequence is that of Trivalent organoarsenical cleaving enzyme from Thermomonospora curvata (strain ATCC 19995 / DSM 43183 / JCM 3096 / KCTC 9072 / NBRC 15933 / NCIMB 10081 / Henssen B9).